Reading from the N-terminus, the 195-residue chain is Recombination protein RecR (195 aa).

The C4-type zinc-finger motif lies at Cys54–Cys69. In terms of domain architecture, Toprim spans Ala77–Pro172.

This sequence belongs to the RecR family.

Functionally, may play a role in DNA repair. It seems to be involved in an RecBC-independent recombinational process of DNA repair. It may act with RecF and RecO. This Treponema denticola (strain ATCC 35405 / DSM 14222 / CIP 103919 / JCM 8153 / KCTC 15104) protein is Recombination protein RecR.